The sequence spans 312 residues: Malate dehydrogenase (312 aa).

NAD(+)-binding positions include 7-13 and Asp-34; that span reads GAAGGIG. Substrate contacts are provided by Arg-81 and Arg-87. NAD(+) contacts are provided by residues Asn-94 and 117–119; that span reads ITN. Positions 119 and 153 each coordinate substrate. His-177 functions as the Proton acceptor in the catalytic mechanism. Met-227 is an NAD(+) binding site.

The protein belongs to the LDH/MDH superfamily. MDH type 1 family. As to quaternary structure, homodimer.

The catalysed reaction is (S)-malate + NAD(+) = oxaloacetate + NADH + H(+). Functionally, catalyzes the reversible oxidation of malate to oxaloacetate. This is Malate dehydrogenase from Moritella marina (Vibrio marinus).